The chain runs to 611 residues: Cilia- and flagella-associated protein 100 (611 aa).

The span at 1–17 shows a compositional bias: polar residues; it reads MSEIPSTIVSKNMTNDK. The segment at 1 to 57 is disordered; that stretch reads MSEIPSTIVSKNMTNDKNSLESMNISSSSSTEENPKKQARKNEEHGPDPSANPFHLS. The span at 20-32 shows a compositional bias: low complexity; sequence LESMNISSSSSTE. Over residues 33–47 the composition is skewed to basic and acidic residues; sequence ENPKKQARKNEEHGP. Coiled coils occupy residues 101–128, 164–203, and 230–257; these read SLRR…RAFR, ALDV…FDEF, and LEIR…KHYK. 2 disordered regions span residues 287–323 and 338–380; these read EVSE…GQGT and SPSY…GEEP. Residues 338 to 357 show a composition bias toward low complexity; it reads SPSYLSSPQQGSQPSESSGG. Coiled coils occupy residues 393–432 and 526–578; these read VFRE…MDRE and QVKI…RGRT.

Belongs to the CFAP100 family.

It localises to the cytoplasm. The protein resides in the cytoskeleton. Its subcellular location is the cilium axoneme. Its function is as follows. May play a role in ciliary/flagellar motility by regulating the assembly and the activity of axonemal inner dynein arm. In Homo sapiens (Human), this protein is Cilia- and flagella-associated protein 100.